A 119-amino-acid chain; its full sequence is Ribosome-binding factor A (119 aa).

Belongs to the RbfA family. In terms of assembly, monomer. Binds 30S ribosomal subunits, but not 50S ribosomal subunits or 70S ribosomes.

The protein localises to the cytoplasm. Functionally, one of several proteins that assist in the late maturation steps of the functional core of the 30S ribosomal subunit. Associates with free 30S ribosomal subunits (but not with 30S subunits that are part of 70S ribosomes or polysomes). Required for efficient processing of 16S rRNA. May interact with the 5'-terminal helix region of 16S rRNA. This chain is Ribosome-binding factor A, found in Chlorobium luteolum (strain DSM 273 / BCRC 81028 / 2530) (Pelodictyon luteolum).